The following is a 165-amino-acid chain: uncharacterized protein (165 aa).

It belongs to the IIV-6 415R family.

This is an uncharacterized protein from Invertebrate iridescent virus 3 (IIV-3).